Here is a 301-residue protein sequence, read N- to C-terminus: Probable 5-dehydro-4-deoxyglucarate dehydratase (301 aa).

This sequence belongs to the DapA family.

It catalyses the reaction 5-dehydro-4-deoxy-D-glucarate + H(+) = 2,5-dioxopentanoate + CO2 + H2O. Its pathway is carbohydrate acid metabolism; D-glucarate degradation; 2,5-dioxopentanoate from D-glucarate: step 2/2. The sequence is that of Probable 5-dehydro-4-deoxyglucarate dehydratase from Allorhizobium ampelinum (strain ATCC BAA-846 / DSM 112012 / S4) (Agrobacterium vitis (strain S4)).